Consider the following 306-residue polypeptide: Aspartate carbamoyltransferase catalytic subunit (306 aa).

Positions 55 and 56 each coordinate carbamoyl phosphate. Lys84 lines the L-aspartate pocket. Residues Arg105, His133, and Gln136 each contribute to the carbamoyl phosphate site. Positions 166 and 227 each coordinate L-aspartate. The carbamoyl phosphate site is built by Leu265 and Pro266.

Belongs to the aspartate/ornithine carbamoyltransferase superfamily. ATCase family. As to quaternary structure, heterododecamer (2C3:3R2) of six catalytic PyrB chains organized as two trimers (C3), and six regulatory PyrI chains organized as three dimers (R2).

The catalysed reaction is carbamoyl phosphate + L-aspartate = N-carbamoyl-L-aspartate + phosphate + H(+). Its pathway is pyrimidine metabolism; UMP biosynthesis via de novo pathway; (S)-dihydroorotate from bicarbonate: step 2/3. In terms of biological role, catalyzes the condensation of carbamoyl phosphate and aspartate to form carbamoyl aspartate and inorganic phosphate, the committed step in the de novo pyrimidine nucleotide biosynthesis pathway. This is Aspartate carbamoyltransferase catalytic subunit from Neisseria meningitidis serogroup A / serotype 4A (strain DSM 15465 / Z2491).